Reading from the N-terminus, the 106-residue chain is Urease subunit beta (106 aa).

The protein belongs to the urease beta subunit family. In terms of assembly, heterotrimer of UreA (gamma), UreB (beta) and UreC (alpha) subunits. Three heterotrimers associate to form the active enzyme.

The protein localises to the cytoplasm. The enzyme catalyses urea + 2 H2O + H(+) = hydrogencarbonate + 2 NH4(+). It participates in nitrogen metabolism; urea degradation; CO(2) and NH(3) from urea (urease route): step 1/1. The polypeptide is Urease subunit beta (Synechococcus sp. (strain CC9605)).